Reading from the N-terminus, the 1469-residue chain is ATP-binding cassette transporter abc4 (1469 aa).

8 consecutive transmembrane segments (helical) span residues 21-40 (SLYY…FPTH), 55-74 (YSLE…RWIT), 94-114 (HGIL…FMFV), 121-141 (AFSD…LFLL), 160-180 (VLLN…PFFF), 189-209 (YSPF…IPLF), 296-316 (ILGM…SPIA), and 337-357 (WIVL…FYLF). The 285-residue stretch at 296–580 (ILGMGVSSFM…IAYLMRQIVQ (285 aa)) folds into the ABC transmembrane type-1 1 domain. The N-linked (GlcNAc...) asparagine glycan is linked to Asn-386. The next 2 helical transmembrane spans lie at 412 to 432 (EFIH…YLLQ) and 441 to 461 (VGLA…PLVA). Asn-510 is a glycosylation site (N-linked (GlcNAc...) asparagine). 2 helical membrane-spanning segments follow: residues 524–544 (VLVE…FTTI) and 553–573 (IAFT…WIAY). In terms of domain architecture, ABC transporter 1 spans 611 to 840 (IGFFNASLTW…LAEQAASASE (230 aa)). N-linked (GlcNAc...) asparagine glycosylation is present at Asn-615. 648–655 (GPTGSGKS) contributes to the ATP binding site. Asn-691, Asn-790, and Asn-815 each carry an N-linked (GlcNAc...) asparagine glycan. A helical transmembrane segment spans residues 894 to 914 (GFYVAAVLLFFVTTQATSILI). The ABC transmembrane type-1 2 domain occupies 897 to 1176 (VAAVLLFFVT…FVRSCNSLQA (280 aa)). N-linked (GlcNAc...) asparagine glycosylation is present at Asn-923. A helical membrane pass occupies residues 936 to 956 (FLFVYGTMLLAYSLLDFLRTV). Residue Asn-1007 is glycosylated (N-linked (GlcNAc...) asparagine). A run of 5 helical transmembrane segments spans residues 1009–1029 (SGWL…ILSV), 1033–1053 (MPIF…FGLL), 1065–1085 (ISIY…GVSV), 1120–1140 (VAVR…LIAL), and 1148–1168 (GVVG…LLFV). The region spanning 1214-1453 (FNHVSVSYSA…NGHFRRMCDG (240 aa)) is the ABC transporter 2 domain. 1246 to 1253 (GRTGSGKS) is an ATP binding site. Residue Asn-1355 is glycosylated (N-linked (GlcNAc...) asparagine).

The protein belongs to the ABC transporter superfamily. ABCC family. Conjugate transporter (TC 3.A.1.208) subfamily.

Its subcellular location is the vacuole membrane. It catalyses the reaction ATP + H2O + xenobioticSide 1 = ADP + phosphate + xenobioticSide 2.. In terms of biological role, involved in detoxification of xenobiotics, and vacuolar sequestration of glutathione S-conjugates. Together with abc2, required for accumulation of a red pigment (ade pigment) in the vacuole of a mutant affected in the adenine biosynthetic pathway. In Schizosaccharomyces pombe (strain 972 / ATCC 24843) (Fission yeast), this protein is ATP-binding cassette transporter abc4.